We begin with the raw amino-acid sequence, 268 residues long: Small ribosomal subunit protein uS3 (268 aa).

The KH type-2 domain maps to 40–110; sequence IRNLFFINYR…KLDLTINEIG (71 aa).

The protein belongs to the universal ribosomal protein uS3 family. As to quaternary structure, part of the 30S ribosomal subunit. Forms a tight complex with proteins S10 and S14.

Binds the lower part of the 30S subunit head. Binds mRNA in the 70S ribosome, positioning it for translation. In Mycoplasma genitalium (strain ATCC 33530 / DSM 19775 / NCTC 10195 / G37) (Mycoplasmoides genitalium), this protein is Small ribosomal subunit protein uS3.